Reading from the N-terminus, the 570-residue chain is Glutamate--tRNA ligase (570 aa).

Residues 107–117 carry the 'HIGH' region motif; that stretch reads PNPDFVLHLGS.

The protein belongs to the class-I aminoacyl-tRNA synthetase family. Glutamate--tRNA ligase type 2 subfamily.

It is found in the cytoplasm. The catalysed reaction is tRNA(Glu) + L-glutamate + ATP = L-glutamyl-tRNA(Glu) + AMP + diphosphate. Functionally, catalyzes the attachment of glutamate to tRNA(Glu) in a two-step reaction: glutamate is first activated by ATP to form Glu-AMP and then transferred to the acceptor end of tRNA(Glu). In Pyrobaculum islandicum (strain DSM 4184 / JCM 9189 / GEO3), this protein is Glutamate--tRNA ligase.